Consider the following 319-residue polypeptide: Acetyl esterase (319 aa).

The short motif at 91-93 is the Involved in the stabilization of the negatively charged intermediate by the formation of the oxyanion hole element; it reads HGG. Catalysis depends on residues Ser165, Asp262, and His292.

It belongs to the 'GDXG' lipolytic enzyme family. As to quaternary structure, homodimer. Interacts with MalT and MelA.

It localises to the cytoplasm. Displays esterase activity towards short chain fatty esters (acyl chain length of up to 8 carbons). Able to hydrolyze triacetylglycerol (triacetin) and tributyrylglycerol (tributyrin), but not trioleylglycerol (triolein) or cholesterol oleate. Negatively regulates MalT activity by antagonizing maltotriose binding. Inhibits MelA galactosidase activity. The protein is Acetyl esterase of Escherichia coli O45:K1 (strain S88 / ExPEC).